Reading from the N-terminus, the 433-residue chain is 3-phosphoshikimate 1-carboxyvinyltransferase (433 aa).

3 residues coordinate 3-phosphoshikimate: Lys23, Ser24, and Arg28. Lys23 contributes to the phosphoenolpyruvate binding site. Phosphoenolpyruvate is bound by residues Gly93 and Arg121. Residues Ser167, Gln169, Asp318, and Lys345 each contribute to the 3-phosphoshikimate site. Gln169 is a binding site for phosphoenolpyruvate. The active-site Proton acceptor is Asp318. Phosphoenolpyruvate is bound by residues Arg349 and Arg390.

It belongs to the EPSP synthase family. In terms of assembly, monomer.

The protein resides in the cytoplasm. The enzyme catalyses 3-phosphoshikimate + phosphoenolpyruvate = 5-O-(1-carboxyvinyl)-3-phosphoshikimate + phosphate. The protein operates within metabolic intermediate biosynthesis; chorismate biosynthesis; chorismate from D-erythrose 4-phosphate and phosphoenolpyruvate: step 6/7. Catalyzes the transfer of the enolpyruvyl moiety of phosphoenolpyruvate (PEP) to the 5-hydroxyl of shikimate-3-phosphate (S3P) to produce enolpyruvyl shikimate-3-phosphate and inorganic phosphate. This is 3-phosphoshikimate 1-carboxyvinyltransferase from Nitratiruptor sp. (strain SB155-2).